The sequence spans 397 residues: Argininosuccinate synthase (397 aa).

ATP-binding positions include Ala-9–Ser-17 and Ala-35. Residues Tyr-88 and Ser-93 each coordinate L-citrulline. Gly-117 contributes to the ATP binding site. L-aspartate is bound by residues Thr-119, Asn-123, and Asp-124. Asn-123 contacts L-citrulline. Arg-127 is a binding site for L-citrulline.

This sequence belongs to the argininosuccinate synthase family. Type 1 subfamily. As to quaternary structure, homotetramer.

The protein localises to the cytoplasm. It carries out the reaction L-citrulline + L-aspartate + ATP = 2-(N(omega)-L-arginino)succinate + AMP + diphosphate + H(+). It participates in amino-acid biosynthesis; L-arginine biosynthesis; L-arginine from L-ornithine and carbamoyl phosphate: step 2/3. This Xanthomonas campestris pv. campestris (strain ATCC 33913 / DSM 3586 / NCPPB 528 / LMG 568 / P 25) protein is Argininosuccinate synthase.